The chain runs to 325 residues: Lipoyl synthase (325 aa).

The disordered stretch occupies residues 1-32; sequence MPPLADASTETLSPAEQAAVRHPEKAHRPDQP. Over residues 19–32 the composition is skewed to basic and acidic residues; that stretch reads AVRHPEKAHRPDQP. Residues Cys-66, Cys-71, Cys-77, Cys-92, Cys-96, Cys-99, and Ser-305 each contribute to the [4Fe-4S] cluster site. The region spanning 78–294 is the Radical SAM core domain; the sequence is WAKKHATFMI…AEVANAKGFL (217 aa).

It belongs to the radical SAM superfamily. Lipoyl synthase family. The cofactor is [4Fe-4S] cluster.

It is found in the cytoplasm. It carries out the reaction [[Fe-S] cluster scaffold protein carrying a second [4Fe-4S](2+) cluster] + N(6)-octanoyl-L-lysyl-[protein] + 2 oxidized [2Fe-2S]-[ferredoxin] + 2 S-adenosyl-L-methionine + 4 H(+) = [[Fe-S] cluster scaffold protein] + N(6)-[(R)-dihydrolipoyl]-L-lysyl-[protein] + 4 Fe(3+) + 2 hydrogen sulfide + 2 5'-deoxyadenosine + 2 L-methionine + 2 reduced [2Fe-2S]-[ferredoxin]. The protein operates within protein modification; protein lipoylation via endogenous pathway; protein N(6)-(lipoyl)lysine from octanoyl-[acyl-carrier-protein]: step 2/2. In terms of biological role, catalyzes the radical-mediated insertion of two sulfur atoms into the C-6 and C-8 positions of the octanoyl moiety bound to the lipoyl domains of lipoate-dependent enzymes, thereby converting the octanoylated domains into lipoylated derivatives. This chain is Lipoyl synthase, found in Beijerinckia indica subsp. indica (strain ATCC 9039 / DSM 1715 / NCIMB 8712).